The primary structure comprises 398 residues: MFLKNIFIGLAIALLVDATPTTTKRSAGFVALDFSVVKTPKAFPVTNGQEGKTSKRQAVPVTLHNEQVTYAADITVGSNNQKLNVIVDTGSSDLWVPDVNVDCQVTYSDQTADFCKQKGTYDPSGSSASQDLNTPFKIGYGDGSSSQGTLYKDTVGFGGVSIKNQVLADVDSTSIDQGILGVGYKTNEAGGSYDNVPVTLKKQGVIAKNAYSLYLNSPDAATGQIIFGGVDNAKYSGSLIALPVTSDRELRISLGSVEVSGKTINTDNVDVLLDSGTTITYLQQDLADQIIKAFNGKLTQDSNGNSFYEVDCNLSGDVVFNFSKNAKISVPASEFAASLQGDDGQPYDKCQLLFDVNDANILGDNFLRSAYIVYDLDNNEISLAQVKYTSASSISALT.

The first 18 residues, 1–18 (MFLKNIFIGLAIALLVDA), serve as a signal peptide directing secretion. The propeptide at 19–56 (TPTTTKRSAGFVALDFSVVKTPKAFPVTNGQEGKTSKR) is activation peptide. Residues 70–384 (YAADITVGSN…DLDNNEISLA (315 aa)) form the Peptidase A1 domain. Asp-88 is an active-site residue. 88-90 (DTG) is a binding site for pepstatin A. Cysteines 103 and 115 form a disulfide. Pepstatin A is bound by residues 141-142 (GD) and 274-278 (DSGTT). The active site involves Asp-274. An intrachain disulfide couples Cys-312 to Cys-350. N-linked (GlcNAc...) asparagine glycosylation is found at Asn-313 and Asn-321.

This sequence belongs to the peptidase A1 family. In terms of assembly, monomer. In terms of processing, O-glycosylated.

It localises to the secreted. It catalyses the reaction Preferential cleavage at the carboxyl of hydrophobic amino acids, but fails to cleave 15-Leu-|-Tyr-16, 16-Tyr-|-Leu-17 and 24-Phe-|-Phe-25 of insulin B chain. Activates trypsinogen, and degrades keratin.. This is Candidapepsin-2 (SAP2) from Candida albicans (strain WO-1) (Yeast).